The following is a 213-amino-acid chain: Pyrrolidone-carboxylate peptidase (213 aa).

Catalysis depends on residues Glu-78, Cys-141, and His-165.

It belongs to the peptidase C15 family. As to quaternary structure, homotetramer.

It is found in the cytoplasm. The catalysed reaction is Release of an N-terminal pyroglutamyl group from a polypeptide, the second amino acid generally not being Pro.. Removes 5-oxoproline from various penultimate amino acid residues except L-proline. This is Pyrrolidone-carboxylate peptidase from Clostridium perfringens (strain SM101 / Type A).